We begin with the raw amino-acid sequence, 257 residues long: MILMMVGIVGCGAIANLITGFVRDGRVPVKLGFFYDRDLERAENLASMVDGRAVLDVADMLPEVDLVVEAASPEAVRDLVPEILEAGKDVVVMSVGALMDPELREMLVELASLNDATIHVPSGAIVGLDGLKAASMGNIESVKLITRKPPRSLGISMDEKKVLYRGRASEAVKKFPLNINVAAALSLACDRDVDVEIIADPAVDRNVHEVTVRGDFGEFKTITENVRCSVNPKTSVMAAYSAIKLLKSLSENIHIGT.

Residues alanine 124 and asparagine 180 each coordinate NAD(+). Histidine 208 is an active-site residue.

It belongs to the L-aspartate dehydrogenase family.

It catalyses the reaction L-aspartate + NADP(+) + H2O = oxaloacetate + NH4(+) + NADPH + H(+). It carries out the reaction L-aspartate + NAD(+) + H2O = oxaloacetate + NH4(+) + NADH + H(+). The protein operates within cofactor biosynthesis; NAD(+) biosynthesis; iminoaspartate from L-aspartate (dehydrogenase route): step 1/1. Specifically catalyzes the NAD or NADP-dependent dehydrogenation of L-aspartate to iminoaspartate. The polypeptide is L-aspartate dehydrogenase (Methanothermobacter thermautotrophicus (strain ATCC 29096 / DSM 1053 / JCM 10044 / NBRC 100330 / Delta H) (Methanobacterium thermoautotrophicum)).